The primary structure comprises 1336 residues: Misshapen-like kinase 1 (1336 aa).

Residues 25 to 289 (FELVEVVGNG…TEQLLKFPFI (265 aa)) form the Protein kinase domain. ATP contacts are provided by residues 31–39 (VGNGTYGQV) and Lys-54. Catalysis depends on Asp-153, which acts as the Proton acceptor. 3 disordered regions span residues 299-347 (RIQL…NVPG), 363-383 (KSNS…QRDP), and 395-890 (QRRI…GGTM). Over residues 317 to 333 (EETEYEYSGSEEEDDSH) the composition is skewed to acidic residues. Residues Ser-324 and Ser-326 each carry the phosphoserine modification. Residues 371 to 380 (QQQQLQQQQQ) are compositionally biased toward low complexity. Over residues 396-466 (RRIEEQKEER…EEQRQSERLQ (71 aa)) the composition is skewed to basic and acidic residues. Residues 479–496 (QKQQQQQQQQQQQQQQQQ) are compositionally biased toward low complexity. An omega-N-methylarginine mark is found at Arg-502 and Arg-510. Basic and acidic residues predominate over residues 519-529 (AWAREVEERAR). Polar residues predominate over residues 531–544 (NKQQNSPLAKTKPS). Over residues 548–562 (PEPPIPQASPSPPGP) the composition is skewed to pro residues. Over residues 599–609 (RSQSLQDQPTR) the composition is skewed to polar residues. Low complexity predominate over residues 622 to 632 (PAAVPTPTATP). Ser-643 bears the Phosphoserine mark. Positions 672–684 (QRTSSIATALNTS) are enriched in polar residues. A Phosphoserine modification is found at Ser-703. Positions 718-731 (PKPPGPPAQPPGPP) are enriched in pro residues. Positions 738 to 750 (DLRRSDPGWERSD) are enriched in basic and acidic residues. Ser-756, Ser-765, Ser-781, Ser-782, and Ser-786 each carry phosphoserine. The segment covering 808 to 825 (LLKERTLDEAPKPPKKAM) has biased composition (basic and acidic residues). The segment covering 832 to 848 (EEVESSEDEEEEGDGEP) has biased composition (acidic residues). A mediates interaction with RAP2A region spans residues 870-1336 (MVVHDVEEVS…TLNRNCIMNW (467 aa)). A Phosphothreonine modification is found at Thr-895. Residues 909-946 (GYTNLPDVVQPSHSPTENSQGQSPPTKDGGGDYQSRGL) are disordered. A compositionally biased stretch (polar residues) spans 919-933 (PSHSPTENSQGQSPP). The CNH domain occupies 1023 to 1310 (NSEILCAALW…KFLCERNDKV (288 aa)).

This sequence belongs to the protein kinase superfamily. STE Ser/Thr protein kinase family. STE20 subfamily. As to quaternary structure, interacts with RAP2A and NCK1. Interacts with TANC1. The cofactor is Mg(2+). Post-translationally, autophosphorylated.

It localises to the cytoplasm. Its subcellular location is the postsynaptic density. The protein resides in the cell projection. It is found in the axon. The protein localises to the dendrite. The catalysed reaction is L-seryl-[protein] + ATP = O-phospho-L-seryl-[protein] + ADP + H(+). The enzyme catalyses L-threonyl-[protein] + ATP = O-phospho-L-threonyl-[protein] + ADP + H(+). In terms of biological role, serine/threonine kinase which acts as a negative regulator of Ras-related Rap2-mediated signal transduction to control neuronal structure and AMPA receptor trafficking. Required for normal synaptic density, dendrite complexity, as well as surface AMPA receptor expression in hippocampal neurons. Can activate the JNK and MAPK14/p38 pathways and mediates stimulation of the stress-activated protein kinase MAPK14/p38 MAPK downstream of the Raf/ERK pathway. Phosphorylates TANC1 upon stimulation by RAP2A, MBP and SMAD1. Has an essential function in negative selection of thymocytes, perhaps by coupling NCK1 to activation of JNK1. Activator of the Hippo signaling pathway which plays a pivotal role in organ size control and tumor suppression by restricting proliferation and promoting apoptosis. MAP4Ks act in parallel to and are partially redundant with STK3/MST2 and STK4/MST2 in the phosphorylation and activation of LATS1/2, and establish MAP4Ks as components of the expanded Hippo pathway. The polypeptide is Misshapen-like kinase 1 (Mink1) (Rattus norvegicus (Rat)).